A 668-amino-acid chain; its full sequence is Bifunctional polymyxin resistance protein ArnA (668 aa).

Residues 1 to 307 (MSAKTVVFAY…ELGLVDGSLL (307 aa)) are formyltransferase ArnAFT. H106 functions as the Proton donor; for formyltransferase activity in the catalytic mechanism. (6R)-10-formyltetrahydrofolate contacts are provided by residues R116 and 138–142 (VKRAD). Positions 317 to 668 (RRTRVLILGV…IERPSNKEAC (352 aa)) are dehydrogenase ArnADH. NAD(+) is bound by residues D350 and 371–372 (DI). Residues A396, Y401, and 435 to 436 (TS) contribute to the UDP-alpha-D-glucuronate site. E437 (proton acceptor; for decarboxylase activity) is an active-site residue. UDP-alpha-D-glucuronate is bound by residues R463, N494, 528–537 (RLFDGGEQKR), and Y615. The active-site Proton donor; for decarboxylase activity is R621.

This sequence in the N-terminal section; belongs to the Fmt family. UDP-L-Ara4N formyltransferase subfamily. The protein in the C-terminal section; belongs to the NAD(P)-dependent epimerase/dehydratase family. UDP-glucuronic acid decarboxylase subfamily. Homohexamer, formed by a dimer of trimers.

It carries out the reaction UDP-alpha-D-glucuronate + NAD(+) = UDP-beta-L-threo-pentopyranos-4-ulose + CO2 + NADH. The catalysed reaction is UDP-4-amino-4-deoxy-beta-L-arabinose + (6R)-10-formyltetrahydrofolate = UDP-4-deoxy-4-formamido-beta-L-arabinose + (6S)-5,6,7,8-tetrahydrofolate + H(+). It participates in nucleotide-sugar biosynthesis; UDP-4-deoxy-4-formamido-beta-L-arabinose biosynthesis; UDP-4-deoxy-4-formamido-beta-L-arabinose from UDP-alpha-D-glucuronate: step 1/3. Its pathway is nucleotide-sugar biosynthesis; UDP-4-deoxy-4-formamido-beta-L-arabinose biosynthesis; UDP-4-deoxy-4-formamido-beta-L-arabinose from UDP-alpha-D-glucuronate: step 3/3. It functions in the pathway bacterial outer membrane biogenesis; lipopolysaccharide biosynthesis. In terms of biological role, bifunctional enzyme that catalyzes the oxidative decarboxylation of UDP-glucuronic acid (UDP-GlcUA) to UDP-4-keto-arabinose (UDP-Ara4O) and the addition of a formyl group to UDP-4-amino-4-deoxy-L-arabinose (UDP-L-Ara4N) to form UDP-L-4-formamido-arabinose (UDP-L-Ara4FN). The modified arabinose is attached to lipid A and is required for resistance to polymyxin and cationic antimicrobial peptides. This Pseudomonas fluorescens (strain Pf0-1) protein is Bifunctional polymyxin resistance protein ArnA.